The following is a 270-amino-acid chain: Phosphonates import ATP-binding protein PhnC 2 (270 aa).

The ABC transporter domain maps to 2–245 (LVVEGLTCRF…IARELYDLEA (244 aa)). 34-41 (GRSGAGKS) contributes to the ATP binding site.

This sequence belongs to the ABC transporter superfamily. Phosphonates importer (TC 3.A.1.9.1) family. The complex is composed of two ATP-binding proteins (PhnC), two transmembrane proteins (PhnE) and a solute-binding protein (PhnD).

Its subcellular location is the cell inner membrane. The catalysed reaction is phosphonate(out) + ATP + H2O = phosphonate(in) + ADP + phosphate + H(+). Its function is as follows. Part of the ABC transporter complex PhnCDE involved in phosphonates import. Responsible for energy coupling to the transport system. This Rhodopseudomonas palustris (strain BisA53) protein is Phosphonates import ATP-binding protein PhnC 2.